A 144-amino-acid polypeptide reads, in one-letter code: Small ribosomal subunit protein eS12 (144 aa).

The protein belongs to the eukaryotic ribosomal protein eS12 family.

In Trypanosoma brucei brucei, this protein is Small ribosomal subunit protein eS12 (RPS12).